The primary structure comprises 697 residues: DNA ligase (697 aa).

NAD(+) contacts are provided by residues 44 to 48, 93 to 94, and E123; these read DGEFD and SL. The N6-AMP-lysine intermediate role is filled by K125. NAD(+) contacts are provided by R146, E186, K302, and K326. Zn(2+) is bound by residues C420, C423, C439, and C445. The BRCT domain occupies 609-697; sequence SIPRNLEGLS…GPDAVTDSGV (89 aa).

Belongs to the NAD-dependent DNA ligase family. LigA subfamily. Mg(2+) serves as cofactor. Mn(2+) is required as a cofactor.

The catalysed reaction is NAD(+) + (deoxyribonucleotide)n-3'-hydroxyl + 5'-phospho-(deoxyribonucleotide)m = (deoxyribonucleotide)n+m + AMP + beta-nicotinamide D-nucleotide.. In terms of biological role, DNA ligase that catalyzes the formation of phosphodiester linkages between 5'-phosphoryl and 3'-hydroxyl groups in double-stranded DNA using NAD as a coenzyme and as the energy source for the reaction. It is essential for DNA replication and repair of damaged DNA. This Rhodococcus opacus (strain B4) protein is DNA ligase.